Consider the following 919-residue polypeptide: DNA double-strand break repair Rad50 ATPase (919 aa).

ATP contacts are provided by residues 33-39 and Gln-143; that span reads NGAGKST. Coiled coils occupy residues 208–268, 315–379, and 414–458; these read MTLR…MLVN, HEVA…RRYT, and ESVL…LEES. The Zinc-hook domain occupies 417 to 516; it reads LERLDAVIND…EASRLQDKRR (100 aa). Cys-464 and Cys-467 together coordinate Zn(2+). 3 coiled-coil regions span residues 486–515, 541–595, and 635–749; these read EAERLRKAAKEKAAEAEKARAEASRLQDKR, EDLA…LQRL, and AYRS…RKAS.

It belongs to the SMC family. RAD50 subfamily. In terms of assembly, homodimer. Forms a heterotetramer composed of two Mre11 subunits and two Rad50 subunits. It depends on Zn(2+) as a cofactor.

In terms of biological role, part of the Rad50/Mre11 complex, which is involved in the early steps of DNA double-strand break (DSB) repair. The complex may facilitate opening of the processed DNA ends to aid in the recruitment of HerA and NurA. Rad50 controls the balance between DNA end bridging and DNA resection via ATP-dependent structural rearrangements of the Rad50/Mre11 complex. The protein is DNA double-strand break repair Rad50 ATPase of Aeropyrum pernix (strain ATCC 700893 / DSM 11879 / JCM 9820 / NBRC 100138 / K1).